Reading from the N-terminus, the 229-residue chain is Heptaprenylglyceryl phosphate synthase (229 aa).

Lys12 provides a ligand contact to sn-glycerol 1-phosphate. Asp14 and Thr40 together coordinate Mg(2+). Residues 159–164, Gly189, and 209–210 each bind sn-glycerol 1-phosphate; these read YIEYSG and GN.

Belongs to the GGGP/HepGP synthase family. Group I subfamily. Homodimer. Mg(2+) serves as cofactor.

The enzyme catalyses sn-glycerol 1-phosphate + all-trans-heptaprenyl diphosphate = 3-heptaprenyl-sn-glycero-1-phosphate + diphosphate. It participates in membrane lipid metabolism; glycerophospholipid metabolism. Prenyltransferase that catalyzes in vivo the transfer of the heptaprenyl moiety of heptaprenyl pyrophosphate (HepPP; 35 carbon atoms) to the C3 hydroxyl of sn-glycerol-1-phosphate (G1P), producing heptaprenylglyceryl phosphate (HepGP). This reaction is an ether-bond-formation step in the biosynthesis of archaea-type G1P-based membrane lipids found in Bacillales. The sequence is that of Heptaprenylglyceryl phosphate synthase from Staphylococcus saprophyticus subsp. saprophyticus (strain ATCC 15305 / DSM 20229 / NCIMB 8711 / NCTC 7292 / S-41).